The sequence spans 243 residues: Uridylate kinase (243 aa).

Lys-12–Gly-15 serves as a coordination point for ATP. The tract at residues Gly-20–Gly-25 is involved in allosteric activation by GTP. Residues Gly-55 and Arg-59 each contribute to the ATP site. UMP is bound by residues Asp-74 and Thr-135–Thr-142. 3 residues coordinate ATP: Gln-163, Tyr-169, and Asp-172.

This sequence belongs to the UMP kinase family. In terms of assembly, homohexamer.

The protein resides in the cytoplasm. The catalysed reaction is UMP + ATP = UDP + ADP. Its pathway is pyrimidine metabolism; CTP biosynthesis via de novo pathway; UDP from UMP (UMPK route): step 1/1. With respect to regulation, allosterically activated by GTP. Inhibited by UTP. Functionally, catalyzes the reversible phosphorylation of UMP to UDP. The polypeptide is Uridylate kinase (Symbiobacterium thermophilum (strain DSM 24528 / JCM 14929 / IAM 14863 / T)).